We begin with the raw amino-acid sequence, 111 residues long: Probable 4-amino-4-deoxy-L-arabinose-phosphoundecaprenol flippase subunit ArnE (111 aa).

3 helical membrane-spanning segments follow: residues 38–58 (LWLG…LLVL), 61–81 (LPVG…TLAA), and 91–111 (PRHW…GSAA). Positions 40-109 (LGLALICMGA…IISGIIILGS (70 aa)) constitute an EamA domain.

Belongs to the ArnE family. In terms of assembly, heterodimer of ArnE and ArnF.

Its subcellular location is the cell inner membrane. The protein operates within bacterial outer membrane biogenesis; lipopolysaccharide biosynthesis. In terms of biological role, translocates 4-amino-4-deoxy-L-arabinose-phosphoundecaprenol (alpha-L-Ara4N-phosphoundecaprenol) from the cytoplasmic to the periplasmic side of the inner membrane. This chain is Probable 4-amino-4-deoxy-L-arabinose-phosphoundecaprenol flippase subunit ArnE, found in Salmonella enteritidis PT4 (strain P125109).